The following is a 297-amino-acid chain: Putative thiosulfate sulfurtransferase SseA (297 aa).

2 consecutive Rhodanese domains span residues 31–138 and 168–286; these read GAPG…ETTL and ILGA…VPIV. Cys245 functions as the Cysteine persulfide intermediate in the catalytic mechanism. Arg250 lines the substrate pocket.

It catalyses the reaction thiosulfate + hydrogen cyanide = thiocyanate + sulfite + 2 H(+). The polypeptide is Putative thiosulfate sulfurtransferase SseA (sseA) (Mycobacterium tuberculosis (strain CDC 1551 / Oshkosh)).